Consider the following 400-residue polypeptide: Outer membrane protein alpha (400 aa).

The N-terminal stretch at 1–20 (MKRVLLTVAMLSVFFSAMFA) is a signal peptide. In terms of domain architecture, SLH spans 21–81 (FFPDVPKDHW…DFIEQKMLAG (61 aa)). The stretch at 85–379 (DLAQVVGNLS…ESVKAYNRNL (295 aa)) forms a coiled coil. 3 tandem repeats follow at residues 208 to 232 (VNLH…LNNK), 251 to 275 (VELH…LNKK), and 326 to 350 (VDLH…LNMK). Residues 208–350 (VNLHEKDIIN…SSLEEDLNMK (143 aa)) are 3 X 25 AA approximate repeat. Residues 380 to 400 (SILTGAFFGILGLILIAISGK) traverse the membrane as a helical segment.

As to quaternary structure, homotetramer.

It localises to the cell outer membrane. In terms of biological role, links the outer membrane to the inner membrane. Long fibrous protein that could serve to separate the two membranes. This chain is Outer membrane protein alpha (omp-alpha), found in Thermotoga maritima (strain ATCC 43589 / DSM 3109 / JCM 10099 / NBRC 100826 / MSB8).